The following is a 1204-amino-acid chain: Cingulin (1204 aa).

The tract at residues Met-7–Ala-357 is head. The disordered stretch occupies residues Glu-25–Ala-48. Residues Ala-48–Gly-62 carry the ZIM motif. Residues Ala-54–Val-67 are interaction with TJP1/ZO1. Disordered regions lie at residues Leu-68–Pro-174 and Asp-186–Ala-266. Residues Ala-93–Thr-119 are compositionally biased toward polar residues. Ser-95, Ser-96, Ser-98, Ser-135, Ser-137, Ser-140, Ser-155, Ser-165, Ser-214, and Ser-217 each carry phosphoserine. Basic and acidic residues predominate over residues Glu-207 to Ser-231. A compositionally biased stretch (polar residues) spans Thr-232–Val-245. Over residues Ser-247–Ser-261 the composition is skewed to low complexity. Ser-258, Ser-276, Ser-338, and Ser-351 each carry phosphoserine. Positions Met-358–Ala-1161 form a coiled coil. The disordered stretch occupies residues Val-379–Glu-398. N6-acetyllysine is present on Lys-579. The disordered stretch occupies residues Ala-1161–Asp-1182. Residues Ser-1162–Cys-1204 form a tail region. Ser-1176, Ser-1177, and Ser-1183 each carry phosphoserine.

It belongs to the cingulin family. As to quaternary structure, homodimer. Interacts with TJP1/ZO1 and SPEF1.

The protein localises to the cell junction. It is found in the tight junction. Probably plays a role in the formation and regulation of the tight junction (TJ) paracellular permeability barrier. The sequence is that of Cingulin from Plecturocebus moloch (Dusky titi monkey).